The chain runs to 731 residues: Polyribonucleotide nucleotidyltransferase (731 aa).

Mg(2+)-binding residues include aspartate 488 and aspartate 494. The region spanning 555-614 is the KH domain; the sequence is PRIEVINIAVDKIRDVIGSGGKVIREIVEQTGAKINIEDDGTIKIASADAKTIEAAKRWI. The 69-residue stretch at 624 to 692 folds into the S1 motif domain; sequence GAIYQGTVVK…ERGKVRLSMK (69 aa). Residues 693-731 form a disordered region; sequence AVDQKTGKEMTDDKSVKEEKCMDEKKQPENKRRRKKKEE. Basic and acidic residues predominate over residues 694 to 722; the sequence is VDQKTGKEMTDDKSVKEEKCMDEKKQPEN.

Belongs to the polyribonucleotide nucleotidyltransferase family. Requires Mg(2+) as cofactor.

The protein localises to the cytoplasm. It carries out the reaction RNA(n+1) + phosphate = RNA(n) + a ribonucleoside 5'-diphosphate. Functionally, involved in mRNA degradation. Catalyzes the phosphorolysis of single-stranded polyribonucleotides processively in the 3'- to 5'-direction. This chain is Polyribonucleotide nucleotidyltransferase, found in Bartonella tribocorum (strain CIP 105476 / IBS 506).